A 116-amino-acid polypeptide reads, in one-letter code: Large ribosomal subunit protein uL18 (116 aa).

Belongs to the universal ribosomal protein uL18 family. As to quaternary structure, part of the 50S ribosomal subunit; part of the 5S rRNA/L5/L18/L25 subcomplex. Contacts the 5S and 23S rRNAs.

In terms of biological role, this is one of the proteins that bind and probably mediate the attachment of the 5S RNA into the large ribosomal subunit, where it forms part of the central protuberance. This chain is Large ribosomal subunit protein uL18, found in Psychrobacter arcticus (strain DSM 17307 / VKM B-2377 / 273-4).